Consider the following 118-residue polypeptide: MARVKRGVIARKRHKKILKLAKGYYGARSRVFRVAKQAVIKAGQYAYRDRRQKKRQFRALWIARINAGARVNGLSYSRFIAGLKKASIEIDRKVLADLAVNEKAAFAAIVEKAKATLA.

This sequence belongs to the bacterial ribosomal protein bL20 family.

In terms of biological role, binds directly to 23S ribosomal RNA and is necessary for the in vitro assembly process of the 50S ribosomal subunit. It is not involved in the protein synthesizing functions of that subunit. The sequence is that of Large ribosomal subunit protein bL20 from Pseudomonas syringae pv. syringae (strain B728a).